Here is a 148-residue protein sequence, read N- to C-terminus: MQKSSMLKKEAAIARRQWYLVDATDLVLGRLSVKVADILRGKNKVDYTPNVDAGDYVIIVNSDKVVLTGQKALRENWYNHSHYIGGLRTRSGEEMISKYSDELIRRSVKGMLPKNKLSKQILNKLFIYKNDKHSHEAQQPTILELKLK.

This sequence belongs to the universal ribosomal protein uL13 family. Part of the 50S ribosomal subunit.

In terms of biological role, this protein is one of the early assembly proteins of the 50S ribosomal subunit, although it is not seen to bind rRNA by itself. It is important during the early stages of 50S assembly. This chain is Large ribosomal subunit protein uL13, found in Ureaplasma urealyticum serovar 10 (strain ATCC 33699 / Western).